The primary structure comprises 458 residues: Argininosuccinate lyase (458 aa).

It belongs to the lyase 1 family. Argininosuccinate lyase subfamily.

It is found in the cytoplasm. It catalyses the reaction 2-(N(omega)-L-arginino)succinate = fumarate + L-arginine. It functions in the pathway amino-acid biosynthesis; L-arginine biosynthesis; L-arginine from L-ornithine and carbamoyl phosphate: step 3/3. This chain is Argininosuccinate lyase, found in Salmonella agona (strain SL483).